The chain runs to 170 residues: Probable inosine/xanthosine triphosphatase (170 aa).

Glu31 contacts Mg(2+).

The protein belongs to the YjjX NTPase family. Homodimer. The cofactor is Mg(2+). It depends on Mn(2+) as a cofactor.

The catalysed reaction is XTP + H2O = XDP + phosphate + H(+). It carries out the reaction ITP + H2O = IDP + phosphate + H(+). In terms of biological role, phosphatase that hydrolyzes non-canonical purine nucleotides such as XTP and ITP to their respective diphosphate derivatives. Probably excludes non-canonical purines from DNA/RNA precursor pool, thus preventing their incorporation into DNA/RNA and avoiding chromosomal lesions. This chain is Probable inosine/xanthosine triphosphatase, found in Oceanobacillus iheyensis (strain DSM 14371 / CIP 107618 / JCM 11309 / KCTC 3954 / HTE831).